Consider the following 166-residue polypeptide: NADH-quinone oxidoreductase subunit A (166 aa).

3 helical membrane-spanning segments follow: residues 16–36 (FAVFLIGAVGLCGLMLLGAYF), 68–88 (FYLVAMFFVIFDVEALYLYAW), and 98–118 (IGFIEAVIFILVLLAGLFYLV). A disordered region spans residues 141 to 166 (RYASSHPQDISQELSVAGSQQANESR).

This sequence belongs to the complex I subunit 3 family. As to quaternary structure, NDH-1 is composed of 13 different subunits. Subunits NuoA, H, J, K, L, M, N constitute the membrane sector of the complex.

The protein localises to the cell inner membrane. It carries out the reaction a quinone + NADH + 5 H(+)(in) = a quinol + NAD(+) + 4 H(+)(out). In terms of biological role, NDH-1 shuttles electrons from NADH, via FMN and iron-sulfur (Fe-S) centers, to quinones in the respiratory chain. The immediate electron acceptor for the enzyme in this species is believed to be ubiquinone. Couples the redox reaction to proton translocation (for every two electrons transferred, four hydrogen ions are translocated across the cytoplasmic membrane), and thus conserves the redox energy in a proton gradient. This Yersinia pseudotuberculosis serotype IB (strain PB1/+) protein is NADH-quinone oxidoreductase subunit A.